The sequence spans 360 residues: Phospho-N-acetylmuramoyl-pentapeptide-transferase (360 aa).

A run of 10 helical transmembrane segments spans residues 26-46 (AIMS…RLIA), 70-90 (GTPT…ALLW), 94-114 (SNPY…VGFV), 132-152 (WKYF…YMHG), 168-188 (VMPQ…VGTS), 199-219 (GLAI…AWAT), 239-259 (LVVL…FNTY), 263-283 (VFMG…IAVL), 288-308 (LLLV…ILQV), and 338-358 (VIVR…ATLK).

It belongs to the glycosyltransferase 4 family. MraY subfamily. Requires Mg(2+) as cofactor.

It is found in the cell inner membrane. The catalysed reaction is UDP-N-acetyl-alpha-D-muramoyl-L-alanyl-gamma-D-glutamyl-meso-2,6-diaminopimeloyl-D-alanyl-D-alanine + di-trans,octa-cis-undecaprenyl phosphate = di-trans,octa-cis-undecaprenyl diphospho-N-acetyl-alpha-D-muramoyl-L-alanyl-D-glutamyl-meso-2,6-diaminopimeloyl-D-alanyl-D-alanine + UMP. The protein operates within cell wall biogenesis; peptidoglycan biosynthesis. Its function is as follows. Catalyzes the initial step of the lipid cycle reactions in the biosynthesis of the cell wall peptidoglycan: transfers peptidoglycan precursor phospho-MurNAc-pentapeptide from UDP-MurNAc-pentapeptide onto the lipid carrier undecaprenyl phosphate, yielding undecaprenyl-pyrophosphoryl-MurNAc-pentapeptide, known as lipid I. This Photobacterium profundum (strain SS9) protein is Phospho-N-acetylmuramoyl-pentapeptide-transferase.